The primary structure comprises 896 residues: Protein translocase subunit SecA (896 aa).

Residues Gln-87, 105 to 109 (GEGKT), and Asp-507 contribute to the ATP site. Residues 855-879 (LSENDEASETQTFRRQEKKIGRNDP) form a disordered region. Positions 866–876 (TFRRQEKKIGR) are enriched in basic and acidic residues. Positions 880, 882, 891, and 892 each coordinate Zn(2+).

Belongs to the SecA family. Monomer and homodimer. Part of the essential Sec protein translocation apparatus which comprises SecA, SecYEG and auxiliary proteins SecDF-YajC and YidC. Zn(2+) serves as cofactor.

It localises to the cell inner membrane. The protein localises to the cytoplasm. It carries out the reaction ATP + H2O + cellular proteinSide 1 = ADP + phosphate + cellular proteinSide 2.. Functionally, part of the Sec protein translocase complex. Interacts with the SecYEG preprotein conducting channel. Has a central role in coupling the hydrolysis of ATP to the transfer of proteins into and across the cell membrane, serving both as a receptor for the preprotein-SecB complex and as an ATP-driven molecular motor driving the stepwise translocation of polypeptide chains across the membrane. The sequence is that of Protein translocase subunit SecA from Legionella pneumophila (strain Lens).